Consider the following 323-residue polypeptide: tRNA dimethylallyltransferase (323 aa).

An ATP-binding site is contributed by 12–19 (GPTASGKT). 14 to 19 (TASGKT) provides a ligand contact to substrate. Interaction with substrate tRNA stretches follow at residues 37 to 40 (DSAL) and 161 to 165 (QRLVR).

This sequence belongs to the IPP transferase family. In terms of assembly, monomer. The cofactor is Mg(2+).

The catalysed reaction is adenosine(37) in tRNA + dimethylallyl diphosphate = N(6)-dimethylallyladenosine(37) in tRNA + diphosphate. In terms of biological role, catalyzes the transfer of a dimethylallyl group onto the adenine at position 37 in tRNAs that read codons beginning with uridine, leading to the formation of N6-(dimethylallyl)adenosine (i(6)A). In Azotobacter vinelandii (strain DJ / ATCC BAA-1303), this protein is tRNA dimethylallyltransferase.